Here is a 216-residue protein sequence, read N- to C-terminus: Probable GTP-binding protein EngB (216 aa).

The EngB-type G domain occupies 30 to 204 (DGLEVAFAGR…HDVLARWLGL (175 aa)). GTP is bound by residues 38–45 (GRSNAGKS), 64–68 (GRTQL), 82–85 (DLPG), 149–152 (TKAD), and 182–185 (LFSA). Residues serine 45 and threonine 66 each contribute to the Mg(2+) site.

Belongs to the TRAFAC class TrmE-Era-EngA-EngB-Septin-like GTPase superfamily. EngB GTPase family. Requires Mg(2+) as cofactor.

Functionally, necessary for normal cell division and for the maintenance of normal septation. This chain is Probable GTP-binding protein EngB, found in Azotobacter vinelandii (strain DJ / ATCC BAA-1303).